A 163-amino-acid chain; its full sequence is MIHYVTPDLCDAYPELVQVVEPMFSNFGGRDSFGGEIVTIKCFEDNSLVKEQADQPGAGKVLVVDGGGSLRRALLGDMIAEKAAKNGWEGLVIYGCVRDVDVLAQTDLGVQALAPHPMKTDKRGIGDLNVVVTFASVTFRPGEYVYADNNGVIVSPSPLKMPE.

Substrate-binding positions include 76 to 79 and Arg98; that span reads GDMI. Position 99 (Asp99) interacts with a divalent metal cation.

The protein belongs to the class II aldolase/RraA-like family. Homotrimer. A divalent metal cation is required as a cofactor.

It catalyses the reaction 4-hydroxy-4-methyl-2-oxoglutarate = 2 pyruvate. The enzyme catalyses oxaloacetate + H(+) = pyruvate + CO2. In terms of biological role, catalyzes the aldol cleavage of 4-hydroxy-4-methyl-2-oxoglutarate (HMG) into 2 molecules of pyruvate. Also contains a secondary oxaloacetate (OAA) decarboxylase activity due to the common pyruvate enolate transition state formed following C-C bond cleavage in the retro-aldol and decarboxylation reactions. The protein is Putative 4-hydroxy-4-methyl-2-oxoglutarate aldolase of Pseudomonas fluorescens.